The following is a 159-amino-acid chain: Phosphopantetheine adenylyltransferase (159 aa).

Residue Thr-10 participates in substrate binding. ATP contacts are provided by residues 10 to 11 (TF) and His-18. Residues Lys-42, Met-74, and Arg-88 each contribute to the substrate site. ATP contacts are provided by residues 89 to 91 (GLR), Glu-99, and 124 to 130 (WSFISSS).

It belongs to the bacterial CoaD family. Homohexamer. The cofactor is Mg(2+).

It is found in the cytoplasm. It catalyses the reaction (R)-4'-phosphopantetheine + ATP + H(+) = 3'-dephospho-CoA + diphosphate. It functions in the pathway cofactor biosynthesis; coenzyme A biosynthesis; CoA from (R)-pantothenate: step 4/5. Reversibly transfers an adenylyl group from ATP to 4'-phosphopantetheine, yielding dephospho-CoA (dPCoA) and pyrophosphate. The polypeptide is Phosphopantetheine adenylyltransferase (Escherichia coli (strain SMS-3-5 / SECEC)).